Consider the following 342-residue polypeptide: Nucleoid-associated protein SO_2177 (342 aa).

It belongs to the YejK family.

The protein localises to the cytoplasm. Its subcellular location is the nucleoid. This Shewanella oneidensis (strain ATCC 700550 / JCM 31522 / CIP 106686 / LMG 19005 / NCIMB 14063 / MR-1) protein is Nucleoid-associated protein SO_2177.